A 976-amino-acid chain; its full sequence is Leucine--tRNA ligase (976 aa).

A compositionally biased stretch (low complexity) spans 1-23 (MTESPTTTPGSTSGAPSGVPSGV). The disordered stretch occupies residues 1–34 (MTESPTTTPGSTSGAPSGVPSGVNDAESDAPRHR). The 'HIGH' region motif lies at 86-97 (PYPSGEGLHVGH). The 'KMSKS' region motif lies at 745 to 749 (KIGKS). Lys-748 lines the ATP pocket.

Belongs to the class-I aminoacyl-tRNA synthetase family.

The protein resides in the cytoplasm. The enzyme catalyses tRNA(Leu) + L-leucine + ATP = L-leucyl-tRNA(Leu) + AMP + diphosphate. This chain is Leucine--tRNA ligase, found in Mycobacterium marinum (strain ATCC BAA-535 / M).